A 287-amino-acid chain; its full sequence is Flagellin (287 aa).

This sequence belongs to the bacterial flagellin family.

The protein localises to the secreted. The protein resides in the bacterial flagellum. In terms of biological role, flagellin is the subunit protein which polymerizes to form the filaments of bacterial flagella. In Listeria innocua serovar 6a (strain ATCC BAA-680 / CLIP 11262), this protein is Flagellin (flaA).